Here is a 221-residue protein sequence, read N- to C-terminus: Putative efflux system component YhbJ (221 aa).

The chain crosses the membrane as a helical span at residues 17-37 (LILTNIIGLIVVLAIIAGGAY).

This sequence belongs to the membrane fusion protein (MFP) (TC 8.A.1) family.

The protein resides in the cell membrane. The polypeptide is Putative efflux system component YhbJ (yhbJ) (Bacillus subtilis (strain 168)).